We begin with the raw amino-acid sequence, 150 residues long: 3-dehydroquinate dehydratase (150 aa).

Y26 (proton acceptor) is an active-site residue. Substrate-binding residues include N77, H83, and D90. The active-site Proton donor is the H103. Residues 104–105 (LS) and R114 each bind substrate.

The protein belongs to the type-II 3-dehydroquinase family. Homododecamer.

The enzyme catalyses 3-dehydroquinate = 3-dehydroshikimate + H2O. The protein operates within metabolic intermediate biosynthesis; chorismate biosynthesis; chorismate from D-erythrose 4-phosphate and phosphoenolpyruvate: step 3/7. Functionally, catalyzes a trans-dehydration via an enolate intermediate. This chain is 3-dehydroquinate dehydratase, found in Vibrio cholerae serotype O1 (strain ATCC 39541 / Classical Ogawa 395 / O395).